The following is a 373-amino-acid chain: D-alanine--D-alanine ligase (373 aa).

In terms of domain architecture, ATP-grasp spans 156-363; that stretch reads KKLWSAAGLP…YPTLLATMVE (208 aa). 184–239 is an ATP binding site; sequence LQRLGLPAYVKPARGGSSIGVSRVSSFDELPAAIAAARRHDPKVIVEAAINGRELE. Residues Asp318, Glu330, and Asn332 each coordinate Mg(2+).

The protein belongs to the D-alanine--D-alanine ligase family. Mg(2+) is required as a cofactor. It depends on Mn(2+) as a cofactor.

The protein resides in the cytoplasm. It carries out the reaction 2 D-alanine + ATP = D-alanyl-D-alanine + ADP + phosphate + H(+). It functions in the pathway cell wall biogenesis; peptidoglycan biosynthesis. Functionally, cell wall formation. This chain is D-alanine--D-alanine ligase, found in Mycobacterium ulcerans (strain Agy99).